Here is a 367-residue protein sequence, read N- to C-terminus: Anhydro-N-acetylmuramic acid kinase (367 aa).

13–20 (GTSMDGAD) contributes to the ATP binding site.

Belongs to the anhydro-N-acetylmuramic acid kinase family.

The catalysed reaction is 1,6-anhydro-N-acetyl-beta-muramate + ATP + H2O = N-acetyl-D-muramate 6-phosphate + ADP + H(+). Its pathway is amino-sugar metabolism; 1,6-anhydro-N-acetylmuramate degradation. It participates in cell wall biogenesis; peptidoglycan recycling. In terms of biological role, catalyzes the specific phosphorylation of 1,6-anhydro-N-acetylmuramic acid (anhMurNAc) with the simultaneous cleavage of the 1,6-anhydro ring, generating MurNAc-6-P. Is required for the utilization of anhMurNAc either imported from the medium or derived from its own cell wall murein, and thus plays a role in cell wall recycling. The polypeptide is Anhydro-N-acetylmuramic acid kinase (Neisseria meningitidis serogroup C / serotype 2a (strain ATCC 700532 / DSM 15464 / FAM18)).